Consider the following 199-residue polypeptide: Shikimate kinase (199 aa).

ATP is bound at residue 12–17 (GAGKST). Ser16 contacts Mg(2+). 3 residues coordinate substrate: Asp34, Arg58, and Gly80. Position 117 (Arg117) interacts with ATP. Arg136 is a binding site for substrate. The disordered stretch occupies residues 174 to 199 (VSGGDRKSSEAERSGAPLRKSSEVVK). The segment covering 177 to 186 (GDRKSSEAER) has biased composition (basic and acidic residues).

This sequence belongs to the shikimate kinase family. As to quaternary structure, monomer. Mg(2+) serves as cofactor.

The protein localises to the cytoplasm. The enzyme catalyses shikimate + ATP = 3-phosphoshikimate + ADP + H(+). Its pathway is metabolic intermediate biosynthesis; chorismate biosynthesis; chorismate from D-erythrose 4-phosphate and phosphoenolpyruvate: step 5/7. In terms of biological role, catalyzes the specific phosphorylation of the 3-hydroxyl group of shikimic acid using ATP as a cosubstrate. The chain is Shikimate kinase from Mycobacterium leprae (strain TN).